A 117-amino-acid polypeptide reads, in one-letter code: Heat shock 70 kDa protein 1-like (117 aa).

ATP is bound by residues 72 to 75 (ERAK) and 84 to 87 (GSTR).

It belongs to the heat shock protein 70 family. As to quaternary structure, interacts with PRKN. Detected at higher levels in caput epididymal spermatazoa than in cauda epididymal spermatazoa (at protein level).

Functionally, molecular chaperone implicated in a wide variety of cellular processes, including protection of the proteome from stress, folding and transport of newly synthesized polypeptides, activation of proteolysis of misfolded proteins and the formation and dissociation of protein complexes. Plays a pivotal role in the protein quality control system, ensuring the correct folding of proteins, the re-folding of misfolded proteins and controlling the targeting of proteins for subsequent degradation. This is achieved through cycles of ATP binding, ATP hydrolysis and ADP release, mediated by co-chaperones. The affinity for polypeptides is regulated by its nucleotide bound state. In the ATP-bound form, it has a low affinity for substrate proteins. However, upon hydrolysis of the ATP to ADP, it undergoes a conformational change that increases its affinity for substrate proteins. It goes through repeated cycles of ATP hydrolysis and nucleotide exchange, which permits cycles of substrate binding and release. Positive regulator of PRKN translocation to damaged mitochondria. The chain is Heat shock 70 kDa protein 1-like from Mesocricetus auratus (Golden hamster).